A 365-amino-acid chain; its full sequence is Outer capsid protein sigma-3 (365 aa).

The CCHC-type zinc finger occupies 51–73; it reads CMHCLGVVGSLQRKLKHLPHHRC.

Belongs to the orthoreovirus sigma-3 protein family. As to quaternary structure, heterohexamer of three sigma-3 and three Mu-1 proteins. The RNA-binding form is probably a homodimer. Cleaved during virus the endosomal proteolytic disassembly of the outer capsid.

It is found in the virion. It localises to the host cytoplasm. Its subcellular location is the host nucleus. Functionally, stimulates translation by blocking the activation of the dsRNA-dependent protein kinase EIF2AK2/PKR, thereby inhibiting the host interferon response. Sigma3 prevents the activation of EIF2AK2 by competing with the kinase for dsRNA-binding. Its function is as follows. The viral outer shell polypeptides, of which sigma-3 is one, impose structural constraints that prevent elongation of nascent transcripts by the RNA-dependent RNA polymerase lambda-3. The chain is Outer capsid protein sigma-3 (S4) from Reovirus type 3 (strain Dearing) (T3D).